The following is a 226-amino-acid chain: ATP synthase F(0) complex subunit a (226 aa).

6 helical membrane passes run 6–26 (FAPF…IMIF), 68–88 (WTLM…LGLL), 97–117 (QLSM…LMGF), 138–158 (IPML…ALAV), 164–184 (ITAG…LSSI), and 193–213 (FTIL…QAYV).

The protein belongs to the ATPase A chain family. As to quaternary structure, component of the ATP synthase complex composed at least of ATP5F1A/subunit alpha, ATP5F1B/subunit beta, ATP5MC1/subunit c (homooctomer), MT-ATP6/subunit a, MT-ATP8/subunit 8, ATP5ME/subunit e, ATP5MF/subunit f, ATP5MG/subunit g, ATP5MK/subunit k, ATP5MJ/subunit j, ATP5F1C/subunit gamma, ATP5F1D/subunit delta, ATP5F1E/subunit epsilon, ATP5PF/subunit F6, ATP5PB/subunit b, ATP5PD/subunit d, ATP5PO/subunit OSCP. ATP synthase complex consists of a soluble F(1) head domain (subunits alpha(3) and beta(3)) - the catalytic core - and a membrane F(0) domain - the membrane proton channel (subunits c, a, 8, e, f, g, k and j). These two domains are linked by a central stalk (subunits gamma, delta, and epsilon) rotating inside the F1 region and a stationary peripheral stalk (subunits F6, b, d, and OSCP). Interacts with DNAJC30; interaction is direct.

It localises to the mitochondrion inner membrane. The enzyme catalyses H(+)(in) = H(+)(out). Subunit a, of the mitochondrial membrane ATP synthase complex (F(1)F(0) ATP synthase or Complex V) that produces ATP from ADP in the presence of a proton gradient across the membrane which is generated by electron transport complexes of the respiratory chain. ATP synthase complex consist of a soluble F(1) head domain - the catalytic core - and a membrane F(1) domain - the membrane proton channel. These two domains are linked by a central stalk rotating inside the F(1) region and a stationary peripheral stalk. During catalysis, ATP synthesis in the catalytic domain of F(1) is coupled via a rotary mechanism of the central stalk subunits to proton translocation. With the subunit c (ATP5MC1), forms the proton-conducting channel in the F(0) domain, that contains two crucial half-channels (inlet and outlet) that facilitate proton movement from the mitochondrial intermembrane space (IMS) into the matrix. Protons are taken up via the inlet half-channel and released through the outlet half-channel, following a Grotthuss mechanism. The polypeptide is ATP synthase F(0) complex subunit a (Ornithorhynchus anatinus (Duckbill platypus)).